A 284-amino-acid chain; its full sequence is NAD kinase (284 aa).

D61 functions as the Proton acceptor in the catalytic mechanism. Residues 61–62 (DG), R66, 136–137 (ND), R147, K164, D166, and L201 each bind NAD(+).

It belongs to the NAD kinase family. It depends on a divalent metal cation as a cofactor.

The protein localises to the cytoplasm. The enzyme catalyses NAD(+) + ATP = ADP + NADP(+) + H(+). Functionally, involved in the regulation of the intracellular balance of NAD and NADP, and is a key enzyme in the biosynthesis of NADP. Catalyzes specifically the phosphorylation on 2'-hydroxyl of the adenosine moiety of NAD to yield NADP. In Dehalococcoides mccartyi (strain CBDB1), this protein is NAD kinase.